The primary structure comprises 1218 residues: Sodium bicarbonate cotransporter 3 (1218 aa).

Disordered regions lie at residues Met1–Ser31 and His53–Val99. Over Met1–Cys612 the chain is Extracellular. Residues Ser57, Ser60, Ser89, and Ser155 each carry the phosphoserine modification. Residues Ser60–Lys77 show a composition bias toward basic residues. The span at Asp78–Pro90 shows a compositional bias: basic and acidic residues. An N-linked (GlcNAc...) asparagine glycan is attached at Asn176. Ser238, Ser247, and Arg263 each carry phosphoserine. The N-linked (GlcNAc...) asparagine glycan is linked to Asn274. Disordered stretches follow at residues Ser294 to Arg350, Lys364 to Thr412, and Ser536 to Pro577. Positions Val308–Ser318 are enriched in pro residues. The segment covering Pro319–Pro337 has biased composition (low complexity). A compositionally biased stretch (polar residues) spans Ser383–Ser396. A phosphoserine mark is found at Ser386, Ser404, and Ser407. An N-linked (GlcNAc...) asparagine glycan is attached at Asn410. Phosphoserine occurs at positions 411 and 560. The span at Pro567–Gly576 shows a compositional bias: basic and acidic residues. Residues Leu613–Leu633 form a helical membrane-spanning segment. Residues Leu634–Arg641 lie on the Cytoplasmic side of the membrane. The helical transmembrane segment at Ile642–Ala662 threads the bilayer. Residues Gly663–Ser699 are Extracellular-facing. Residues Ile700–Val720 traverse the membrane as a helical segment. Topologically, residues Cys721–Glu729 are cytoplasmic. A helical transmembrane segment spans residues Ala730 to Leu750. Topologically, residues Gly751–His821 are extracellular. Residues Cys770 and Cys772 are joined by a disulfide bond. 3 N-linked (GlcNAc...) asparagine glycosylation sites follow: Asn780, Asn790, and Asn800. An intrachain disulfide couples Cys806 to Cys818. The helical transmembrane segment at Gly822–Leu842 threads the bilayer. At Ser843–Asp865 the chain is on the cytoplasmic side. The helical transmembrane segment at Phe866–Ser886 threads the bilayer. Topologically, residues Pro887 to Asn912 are extracellular. A helical transmembrane segment spans residues Pro913 to Met933. Residues Asp934–Asp958 lie on the Cytoplasmic side of the membrane. Residues Leu959 to Ala979 form a helical membrane-spanning segment. At Ala980–Thr1015 the chain is on the extracellular side. The essential for cell membrane localization and transport activity stretch occupies residues Gln1012–Leu1135. Residues Gly1016 to Ile1036 traverse the membrane as a helical segment. Topologically, residues Pro1037–Met1038 are cytoplasmic. Residues Pro1039–Phe1059 form a helical membrane-spanning segment. Topologically, residues Asp1060–Cys1096 are extracellular. 2 positions are modified to phosphoserine: Met1067 and Leu1078. The chain crosses the membrane as a helical span at residues Leu1097 to Leu1117. Positions Ala1118–Asp1140 are essential for interaction with RACK1. The Cytoplasmic segment spans residues Ala1118 to Leu1218. Residues Leu1138–Asp1140 are CA2-binding. The span at Lys1148 to Leu1165 shows a compositional bias: basic and acidic residues. Positions Lys1148–Val1172 are disordered. A Phosphothreonine modification is found at Thr1171. Phosphoserine is present on residues Ser1180, Thr1188, Ile1201, and Ser1217. A PDZ-binding motif is present at residues Glu1215–Leu1218.

It belongs to the anion exchanger (TC 2.A.31) family. In terms of assembly, interacts with USH1C. Forms a complex with ATP6V1B1 and NHERF1/EBP50. Interacts in a pH dependent-manner with CA2/carbonic anhydrase 2. Interacts with CFTR probably through NHERF1/EBP50. Interacts with RACK1. Post-translationally, undergoes lysosome-mediated degradation. In terms of processing, N-glycosylated. Expressed in aorta, ventricles, atrium, mesenteric artery, kidney, spleen, duodenum, jejunum, ileum, colon, lung, trachea, gastric fundus and pylorus, cerebrum, cerebellum, pancreas, liver, parotid gland, and epididymis. Expressed in the inner ear by cochlear outer and inner hair cells (at protein level). Highly expressed in testis and spleen. As to expression, specifically expressed in kidney. In terms of tissue distribution, specifically expressed in hippocampal neurons.

It is found in the basolateral cell membrane. It localises to the apical cell membrane. The protein resides in the cell projection. Its subcellular location is the stereocilium. The protein localises to the cell membrane. The catalysed reaction is hydrogencarbonate(in) + Na(+)(in) = hydrogencarbonate(out) + Na(+)(out). With respect to regulation, insensitive to stilbene derivatives. Its function is as follows. Electroneutral sodium- and bicarbonate-dependent cotransporter with a Na(+):HCO3(-) 1:1 stoichiometry. Mediates the sodium-dependent bicarbonate transport important for pH recovery after acid load as well as for regulation of steady-state pH in the duodenum and vascular smooth muscle cells. Plays a key role in macrophage acidification, mediating bicarbonate import into the cytoplasm which is crucial for net acid extrusion and maintenance of cytoplasmic pH during phagocytosis. Provides cellular bicarbonate for de novo purine and pyrimidine synthesis and is a key mediator of de novo nucleotide synthesis downstream of mTORC1 signaling in proliferating cells. This Rattus norvegicus (Rat) protein is Sodium bicarbonate cotransporter 3 (Slc4a7).